We begin with the raw amino-acid sequence, 1277 residues long: Myosin-1 (1277 aa).

The segment covering 1–13 has biased composition (basic residues); it reads MAPSKKAGKKVTP. Positions 1 to 27 are disordered; that stretch reads MAPSKKAGKKVTPKKAAGNNAKSKVAK. A Myosin motor domain is found at 39-718; sequence VGVTDMTLLT…TLFALETMRD (680 aa). 132 to 139 lines the ATP pocket; the sequence is GESGAGKT. S360 carries the phosphoserine modification. Residues 407–489 form an actin-binding region; that stretch reads IIGILDIFGF…PGIFAALNDA (83 aa). The disordered stretch occupies residues 567 to 587; the sequence is LFPDRPDPNSKKRPPTASDRI. IQ domains lie at 722-742 and 743-768; these read HNMAARIQRAFRNYMRYKHEC and ARRIQRFWKNNKEALVYAQVRDYGHQ. Residues 776 to 965 form the TH1 domain; it reads RRRFSLLSYR…TVHVPSGEPA (190 aa). Disordered stretches follow at residues 952 to 1072 and 1129 to 1259; these read YKSH…AEPE and PKAA…GPGQ. Low complexity predominate over residues 1015 to 1056; it reads PAVATPSVVSTPAAAAVVSKPKPAASTPAAVRAPAVTPAARS. The span at 1057-1068 shows a compositional bias: pro residues; the sequence is VPPPPPPPPPAR. Residues 1071–1129 form the SH3 domain; the sequence is PEKEMYRAKFDFQGQEGEMSLTKDDEVELIEKDENGWWLVKKDGVEAWAPYNYLERIAP. Residues 1132–1142 are compositionally biased toward pro residues; the sequence is APAPPPPPARP. Composition is skewed to polar residues over residues 1145 to 1159 and 1185 to 1197; these read TSTVPKPPLSSTTAD and AATTDSTPNSSRP. The segment covering 1204-1224 has biased composition (pro residues); the sequence is VPPPVAAKPKPPVVAPKPGVP. Over residues 1226–1240 the composition is skewed to low complexity; the sequence is PGGKPALPTTARPAP. The span at 1241–1258 shows a compositional bias: gly residues; that stretch reads SGGGAAAGRLGGGGGGPG.

It belongs to the TRAFAC class myosin-kinesin ATPase superfamily. Myosin family. In terms of processing, phosphorylation of the TEDS site (Ser-360) is required for the polarization of the actin cytoskeleton. Phosphorylation probably activates the myosin-I ATPase activity.

The protein resides in the cytoplasm. It localises to the cytoskeleton. The protein localises to the actin patch. Type-I myosin implicated in the organization of the actin cytoskeleton. Required for proper actin cytoskeleton polarization. At the cell cortex, assembles in patch-like structures together with proteins from the actin-polymerizing machinery and promotes actin assembly. Functions as actin nucleation-promoting factor (NPF) for the Arp2/3 complex. This Coprinopsis cinerea (strain Okayama-7 / 130 / ATCC MYA-4618 / FGSC 9003) (Inky cap fungus) protein is Myosin-1 (MYO1).